Reading from the N-terminus, the 233-residue chain is Demethylmenaquinone methyltransferase (233 aa).

Residues T60, D81, and 106 to 107 (DA) each bind S-adenosyl-L-methionine.

This sequence belongs to the class I-like SAM-binding methyltransferase superfamily. MenG/UbiE family.

It catalyses the reaction a 2-demethylmenaquinol + S-adenosyl-L-methionine = a menaquinol + S-adenosyl-L-homocysteine + H(+). It functions in the pathway quinol/quinone metabolism; menaquinone biosynthesis; menaquinol from 1,4-dihydroxy-2-naphthoate: step 2/2. Functionally, methyltransferase required for the conversion of demethylmenaquinol (DMKH2) to menaquinol (MKH2). The protein is Demethylmenaquinone methyltransferase of Staphylococcus saprophyticus subsp. saprophyticus (strain ATCC 15305 / DSM 20229 / NCIMB 8711 / NCTC 7292 / S-41).